The sequence spans 577 residues: Outer spore wall assembly protein SHE10 (577 aa).

Positions 1 to 23 are cleaved as a signal peptide; that stretch reads MGKLIKLITTLTVLVSLLQYCCE. 2 coiled-coil regions span residues 379 to 416 and 513 to 561; these read NETR…ENVE and ILRS…EEDV. Basic and acidic residues predominate over residues 525-545; the sequence is RERKERERKEREKAAAEEFQR. Residues 525-577 are disordered; the sequence is RERKERERKEREKAAAEEFQRQQELLLQQEEEDEEDVSYTSTSTITTTTTMTL. Residues 562–577 are compositionally biased toward low complexity; sequence SYTSTSTITTTTTMTL.

This sequence belongs to the SHE10 family. Component of the mitochondria-localized RNase mitochondrial RNA-processing (RNase MRP) composed of one single RNA encoded by the NME1 gene and at least 31 proteins. Absent in the nucleus-localized RNase MRP (NuMRP).

The protein resides in the mitochondrion. Functionally, involved in spore wall assembly. May be a component of the mitochondrial RNase MRP (MtMRP), a ribonucleoprotein endoribonuclease involved in the cleaving RNA transcripts to generate primers for DNA replication in mitochondria. The sequence is that of Outer spore wall assembly protein SHE10 from Saccharomyces cerevisiae (strain RM11-1a) (Baker's yeast).